Consider the following 206-residue polypeptide: Ras-related protein RABG3d (206 aa).

Position 15-22 (15-22) interacts with GTP; sequence GDSGVGKT. Residues 37 to 45 carry the Effector region motif; the sequence is YKATIGADF. Residues 63-67, 125-128, and 158-159 contribute to the GTP site; these read DTAGQ, NKTD, and SA. S-geranylgeranyl cysteine attachment occurs at residues Cys-204 and Cys-206. Cys-206 carries the post-translational modification Cysteine methyl ester.

Belongs to the small GTPase superfamily. Rab family.

The protein localises to the cell membrane. Functionally, intracellular vesicle trafficking and protein transport. This chain is Ras-related protein RABG3d (RABG3D), found in Arabidopsis thaliana (Mouse-ear cress).